Consider the following 806-residue polypeptide: Leucine--tRNA ligase (806 aa).

The 'HIGH' region signature appears at 38-48 (PYPSGEIHMGH). The 'KMSKS' region signature appears at 572-576 (KMSKS). Lys-575 is an ATP binding site.

It belongs to the class-I aminoacyl-tRNA synthetase family.

The protein resides in the cytoplasm. The catalysed reaction is tRNA(Leu) + L-leucine + ATP = L-leucyl-tRNA(Leu) + AMP + diphosphate. This chain is Leucine--tRNA ligase, found in Helicobacter pylori (strain J99 / ATCC 700824) (Campylobacter pylori J99).